A 536-amino-acid chain; its full sequence is Phosphoenolpyruvate carboxykinase (ATP) (536 aa).

Substrate is bound by residues arginine 61, tyrosine 195, and lysine 201. ATP is bound by residues lysine 201, histidine 220, and 236–244 (GLSGTGKTT). 2 residues coordinate Mn(2+): lysine 201 and histidine 220. Aspartate 257 lines the Mn(2+) pocket. Glutamate 285, arginine 322, and threonine 447 together coordinate ATP. Residue arginine 322 coordinates substrate.

Belongs to the phosphoenolpyruvate carboxykinase (ATP) family. The cofactor is Mn(2+).

The protein localises to the cytoplasm. The enzyme catalyses oxaloacetate + ATP = phosphoenolpyruvate + ADP + CO2. The protein operates within carbohydrate biosynthesis; gluconeogenesis. Its function is as follows. Involved in the gluconeogenesis. Catalyzes the conversion of oxaloacetate (OAA) to phosphoenolpyruvate (PEP) through direct phosphoryl transfer between the nucleoside triphosphate and OAA. This Rhizobium etli (strain CIAT 652) protein is Phosphoenolpyruvate carboxykinase (ATP).